Consider the following 246-residue polypeptide: Probable phosphatase Tola_0828 (246 aa).

Zn(2+)-binding residues include H8, H10, H16, H41, E74, H102, H132, D193, and H195.

This sequence belongs to the PHP family. Zn(2+) serves as cofactor.

The polypeptide is Probable phosphatase Tola_0828 (Tolumonas auensis (strain DSM 9187 / NBRC 110442 / TA 4)).